We begin with the raw amino-acid sequence, 205 residues long: Pyrrolidone-carboxylate peptidase (205 aa).

Catalysis depends on residues E79, C142, and H165.

This sequence belongs to the peptidase C15 family. Homotetramer.

It localises to the cytoplasm. The enzyme catalyses Release of an N-terminal pyroglutamyl group from a polypeptide, the second amino acid generally not being Pro.. Functionally, removes 5-oxoproline from various penultimate amino acid residues except L-proline. The protein is Pyrrolidone-carboxylate peptidase of Gloeobacter violaceus (strain ATCC 29082 / PCC 7421).